Reading from the N-terminus, the 569-residue chain is Neutral leucine aminopeptidase, chloroplastic (569 aa).

The N-terminal 48 residues, 1 to 48, are a transit peptide targeting the chloroplast; sequence MNGVLCSSSSSFHSYPSIFTKFQSSPIWSFSISVTPLCSRRAKRMAHS. Mn(2+) contacts are provided by K339 and D344. K351 is a catalytic residue. The Mn(2+) site is built by D364, D424, and E426. R428 is an active-site residue.

The protein belongs to the peptidase M17 family. As to quaternary structure, homohexamer (dimer of homotrimers). The cofactor is Mn(2+). In terms of tissue distribution, expressed constitutively at low levels. Expressed in vegetative and reproductive organs, including leaves, stems, roots, cotyledons (after imbibition), pistils, sepals, petals, stamens, and floral buds (at protein level). Present at very low levels in healthy leaves.

It localises to the plastid. It is found in the chloroplast. The catalysed reaction is Release of an N-terminal amino acid, Xaa-|-Yaa-, in which Xaa is preferably Leu, but may be other amino acids including Pro although not Arg or Lys, and Yaa may be Pro. Amino acid amides and methyl esters are also readily hydrolyzed, but rates on arylamides are exceedingly low.. It carries out the reaction Release of N-terminal proline from a peptide.. In terms of biological role, catalyzes the removal of unsubstituted N-terminal amino acids from various peptides. When associated as homohexamer, catalyzes the proteolyzes of Xaa-Leu dipeptides. Possesses leucine aminopeptidase activity against the model substrate leucine-amido methyl coumarin. Presumably involved in the processing and regular turnover of intracellular proteins. Its function is as follows. Functions as a molecular chaperone to protect proteins from heat-induced damage. The polypeptide is Neutral leucine aminopeptidase, chloroplastic (Solanum lycopersicum (Tomato)).